Consider the following 521-residue polypeptide: GMP synthase [glutamine-hydrolyzing] (521 aa).

The region spanning 5-203 (KILILDFGSQ…VHEICGCGND (199 aa)) is the Glutamine amidotransferase type-1 domain. The active-site Nucleophile is Cys-82. Active-site residues include His-177 and Glu-179. One can recognise a GMPS ATP-PPase domain in the interval 204 to 396 (WNMPDYISEA…LGLPHDMVYR (193 aa)). Residue 231-237 (SGGVDSS) coordinates ATP.

As to quaternary structure, homodimer.

It catalyses the reaction XMP + L-glutamine + ATP + H2O = GMP + L-glutamate + AMP + diphosphate + 2 H(+). The protein operates within purine metabolism; GMP biosynthesis; GMP from XMP (L-Gln route): step 1/1. Its function is as follows. Catalyzes the synthesis of GMP from XMP. This is GMP synthase [glutamine-hydrolyzing] from Azoarcus sp. (strain BH72).